A 206-amino-acid polypeptide reads, in one-letter code: LexA repressor (206 aa).

Residues 28 to 48 (RAEIAKRLGFKSANAAEEHLK) constitute a DNA-binding region (H-T-H motif). Catalysis depends on for autocatalytic cleavage activity residues serine 123 and lysine 160.

The protein belongs to the peptidase S24 family. In terms of assembly, homodimer.

It catalyses the reaction Hydrolysis of Ala-|-Gly bond in repressor LexA.. Represses a number of genes involved in the response to DNA damage (SOS response), including recA and lexA. In the presence of single-stranded DNA, RecA interacts with LexA causing an autocatalytic cleavage which disrupts the DNA-binding part of LexA, leading to derepression of the SOS regulon and eventually DNA repair. This Shewanella sediminis (strain HAW-EB3) protein is LexA repressor.